Consider the following 67-residue polypeptide: Large ribosomal subunit protein uL29 (67 aa).

It belongs to the universal ribosomal protein uL29 family.

The sequence is that of Large ribosomal subunit protein uL29 from Sorangium cellulosum (strain So ce56) (Polyangium cellulosum (strain So ce56)).